A 325-amino-acid polypeptide reads, in one-letter code: D site-binding protein (325 aa).

3 disordered regions span residues 1–99 (MARP…APGL), 127–200 (GLPP…DTVE), and 229–255 (RFSEEELKPQPIMKKARKIQVPEEQKD). Residues 17-28 (GPAGTPPGGGAL) show a composition bias toward gly residues. 2 stretches are compositionally biased toward low complexity: residues 29–38 (LGLRSLLQGT) and 57–80 (ALPAATTPGPGLETAGPADAPAGA). Ser-86 is modified (phosphoserine). Positions 129–153 (PPSPPPPGGPSPEPSPARTPAPSPG) are enriched in pro residues. A compositionally biased stretch (low complexity) spans 157 to 167 (CGSASPRSSPG). Residues 255–318 (DEKYWSRRYK…SHYRAVLSRY (64 aa)) enclose the bZIP domain. Positions 257–279 (KYWSRRYKNNEAAKRSRDARRLK) are basic motif. Residues 283 to 297 (ISVRAAFLEKENALL) are leucine-zipper.

It belongs to the bZIP family. PAR subfamily. As to quaternary structure, binds DNA as a homodimer or a heterodimer. Can form a heterodimer with TEF. Ubiquitously expressed. Expressed in the suprachiasmatic nuclei (SCN) and in most peripheral tissues, with a strong circadian rhythmicity.

Its subcellular location is the nucleus. Functionally, this transcriptional activator recognizes and binds to the sequence 5'-RTTAYGTAAY-3' found in the promoter of genes such as albumin, CYP2A4 and CYP2A5. It is not essential for circadian rhythm generation, but modulates important clock output genes. May be a direct target for regulation by the circadian pacemaker component clock. May affect circadian period and sleep regulation. The sequence is that of D site-binding protein (DBP) from Homo sapiens (Human).